Here is a 118-residue protein sequence, read N- to C-terminus: Cell division protein FtsB (118 aa).

Residues 1-6 (MRNWRW) lie on the Cytoplasmic side of the membrane. A helical membrane pass occupies residues 7–24 (LLLVLAALLSWLQHRFWF). The Periplasmic portion of the chain corresponds to 25 to 118 (GPGNSGEVRM…DLAQPRREKR (94 aa)). A coiled-coil region spans residues 30-66 (GEVRMLQVQIVQQHQENERLRQRNASLAAEVKNLKDG). The tract at residues 97–118 (PLPNDTSADHGVDLAQPRREKR) is disordered. Residues 103–118 (SADHGVDLAQPRREKR) are compositionally biased toward basic and acidic residues.

It belongs to the FtsB family. As to quaternary structure, part of a complex composed of FtsB, FtsL and FtsQ.

Its subcellular location is the cell inner membrane. Its function is as follows. Essential cell division protein. May link together the upstream cell division proteins, which are predominantly cytoplasmic, with the downstream cell division proteins, which are predominantly periplasmic. This chain is Cell division protein FtsB, found in Xylella fastidiosa (strain 9a5c).